Here is a 318-residue protein sequence, read N- to C-terminus: Small ribosomal subunit protein mS26 (318 aa).

The segment at Ile295–Leu318 is disordered. Low complexity predominate over residues Asn300–Leu318.

Belongs to the mitochondrion-specific ribosomal protein mS26 family. In terms of assembly, component of the mitochondrial small ribosomal subunit (mt-SSU). Mature yeast 74S mitochondrial ribosomes consist of a small (37S) and a large (54S) subunit. The 37S small subunit contains a 15S ribosomal RNA (15S mt-rRNA) and 34 different proteins. The 54S large subunit contains a 21S rRNA (21S mt-rRNA) and 46 different proteins.

The protein resides in the mitochondrion. Its function is as follows. Component of the mitochondrial ribosome (mitoribosome), a dedicated translation machinery responsible for the synthesis of mitochondrial genome-encoded proteins, including at least some of the essential transmembrane subunits of the mitochondrial respiratory chain. The mitoribosomes are attached to the mitochondrial inner membrane and translation products are cotranslationally integrated into the membrane. This is Small ribosomal subunit protein mS26 (PET123) from Saccharomyces cerevisiae (strain ATCC 204508 / S288c) (Baker's yeast).